A 129-amino-acid polypeptide reads, in one-letter code: Fluoride-specific ion channel FluC (129 aa).

A run of 4 helical transmembrane segments spans residues 8–28 (FFCV…MVLA), 36–56 (AFPF…GLLL), 71–91 (FLGV…VEVV), and 103–123 (ALHI…AMML). Residues G78 and T81 each contribute to the Na(+) site.

The protein belongs to the fluoride channel Fluc/FEX (TC 1.A.43) family.

The protein localises to the cell inner membrane. The enzyme catalyses fluoride(in) = fluoride(out). Its activity is regulated as follows. Na(+) is not transported, but it plays an essential structural role and its presence is essential for fluoride channel function. Fluoride-specific ion channel. Important for reducing fluoride concentration in the cell, thus reducing its toxicity. In Idiomarina loihiensis (strain ATCC BAA-735 / DSM 15497 / L2-TR), this protein is Fluoride-specific ion channel FluC.